The primary structure comprises 121 residues: Protransforming growth factor alpha (121 aa).

A signal peptide is located at residue L1. The propeptide at 2 to 16 (ENSTSLLSDPPVAAA) is removed in mature form. Residues 2 to 75 (ENSTSLLSDP…AVVAASQKKQ (74 aa)) lie on the Extracellular side of the membrane. The N-linked (GlcNAc...) asparagine glycan is linked to N3. Residues 20-60 (HFNDCPDSHTQFCFHGTCRFLVQEDRPACVCHSGYVGARCE) enclose the EGF-like domain. Cystine bridges form between C24/C37, C32/C48, and C50/C59. Residues 67-121 (VVAASQKKQAITALVVVSIVALAVLIITCVLIHCCQVRKHCEWCRALICRHEKPS) constitute a propeptide, removed in mature form. Residues 76 to 101 (AITALVVVSIVALAVLIITCVLIHCC) traverse the membrane as a helical segment.

Interacts with the PDZ domains of MAGI3, SDCBP and SNTA1. The interaction with SDCBP, is required for the targeting to the cell surface. In the endoplasmic reticulum, in its immature form (i.e. with a prosegment and lacking full N-glycosylation), interacts with CNIH. In the Golgi apparatus, may form a complex with CNIH and GORASP2. Interacts (via cytoplasmic C-terminal domain) with NKD2. In terms of tissue distribution, hypothalamus.

It localises to the secreted. The protein localises to the extracellular space. Its subcellular location is the cell membrane. In terms of biological role, TGF alpha is a mitogenic polypeptide that is able to bind to the EGF receptor/EGFR and to act synergistically with TGF beta to promote anchorage-independent cell proliferation in soft agar. This chain is Protransforming growth factor alpha (TGFA), found in Macaca mulatta (Rhesus macaque).